The sequence spans 269 residues: Malonyl-[acyl-carrier protein] O-methyltransferase (269 aa).

The protein belongs to the methyltransferase superfamily.

The catalysed reaction is malonyl-[ACP] + S-adenosyl-L-methionine = malonyl-[ACP] methyl ester + S-adenosyl-L-homocysteine. It functions in the pathway cofactor biosynthesis; biotin biosynthesis. In terms of biological role, converts the free carboxyl group of a malonyl-thioester to its methyl ester by transfer of a methyl group from S-adenosyl-L-methionine (SAM). It allows to synthesize pimeloyl-ACP via the fatty acid synthetic pathway. This Bacillus cereus (strain ATCC 14579 / DSM 31 / CCUG 7414 / JCM 2152 / NBRC 15305 / NCIMB 9373 / NCTC 2599 / NRRL B-3711) protein is Malonyl-[acyl-carrier protein] O-methyltransferase.